A 390-amino-acid chain; its full sequence is Lipid droplet-regulating VLDL assembly factor AUP1 homolog (390 aa).

Residues 1 to 32 lie on the Cytoplasmic side of the membrane; the sequence is MASPEASSSGNTEDLRIEDLFHQKRNEDTIAK. The stretch at 33–53 is an intramembrane region; the sequence is IFSIIYAPVGLIILLIRVFLG. The Cytoplasmic segment spans residues 54-390; that stretch reads FHTFIVACLL…NRQKYMNRDS (337 aa). The CUE domain maps to 305-347; that stretch reads QMDECAMRIKQSFPSFHLSAIRRDLEKTRSQTTTVNNLKAGKI.

This sequence belongs to the AUP1 family.

The protein localises to the endoplasmic reticulum membrane. It is found in the lipid droplet. This chain is Lipid droplet-regulating VLDL assembly factor AUP1 homolog, found in Caenorhabditis elegans.